The primary structure comprises 292 residues: Probable ABC transporter permease protein PH1215 (292 aa).

The next 6 membrane-spanning stretches (helical) occupy residues 10 to 30 (IILFLIPALILIGIFVYFAVV), 72 to 92 (LLLILLFVPGSLLLGLFLAIL), 106 to 126 (IYVLPFALSFVVTATLWAWMY), 160 to 180 (IIIALIWQFSGYTMIIYLAGI), 215 to 235 (LSAFVVLMVFSLKAFDFIWVL), and 261 to 281 (FAYGAAIATILLLMALVVVLP). Positions 68-284 (LRNNLLLILL…ALVVVLPYLY (217 aa)) constitute an ABC transmembrane type-1 domain.

Belongs to the binding-protein-dependent transport system permease family. MalFG subfamily.

It is found in the cell membrane. In terms of biological role, probably part of a binding-protein-dependent transport system PH1214/15/16. Probably responsible for the translocation of the substrate across the membrane. This Pyrococcus horikoshii (strain ATCC 700860 / DSM 12428 / JCM 9974 / NBRC 100139 / OT-3) protein is Probable ABC transporter permease protein PH1215.